The following is a 251-amino-acid chain: Gamma-interferon-inducible lysosomal thiol reductase (251 aa).

The signal sequence occupies residues 1–21 (MFGFRLSVLLFAVCSLSACSC). A Saposin A-type domain is found at 22–60 (MFVNSCKYPPSQWCDSRDIAAQCGVLEQCMKFNASPVTV). C68 and C71 are disulfide-bonded. N-linked (GlcNAc...) asparagine glycosylation occurs at N108.

The protein belongs to the GILT family. In terms of assembly, dimer; disulfide-linked. As to expression, highly expressed in spleen and kidney. Also detected at lower levels in liver, heart, brain, intestine and gill.

It is found in the secreted. It localises to the lysosome. Its function is as follows. Lysosomal thiol reductase that can reduce protein disulfide bonds. May facilitate the complete unfolding of proteins destined for lysosomal degradation. Plays an important role in antigen processing. The protein is Gamma-interferon-inducible lysosomal thiol reductase of Carassius auratus (Goldfish).